The following is a 269-amino-acid chain: GTP cyclohydrolase FolE2 2 (269 aa).

Belongs to the GTP cyclohydrolase IV family.

The catalysed reaction is GTP + H2O = 7,8-dihydroneopterin 3'-triphosphate + formate + H(+). The protein operates within cofactor biosynthesis; 7,8-dihydroneopterin triphosphate biosynthesis; 7,8-dihydroneopterin triphosphate from GTP: step 1/1. Functionally, converts GTP to 7,8-dihydroneopterin triphosphate. The protein is GTP cyclohydrolase FolE2 2 of Burkholderia lata (strain ATCC 17760 / DSM 23089 / LMG 22485 / NCIMB 9086 / R18194 / 383).